A 566-amino-acid polypeptide reads, in one-letter code: Glucose-6-phosphate isomerase, cytosolic (566 aa).

Glutamate 360 (proton donor) is an active-site residue. Catalysis depends on residues histidine 391 and lysine 516.

It belongs to the GPI family. As to quaternary structure, homodimer.

The protein resides in the cytoplasm. The catalysed reaction is alpha-D-glucose 6-phosphate = beta-D-fructose 6-phosphate. Its pathway is carbohydrate degradation; glycolysis; D-glyceraldehyde 3-phosphate and glycerone phosphate from D-glucose: step 2/4. The protein is Glucose-6-phosphate isomerase, cytosolic (PGIC) of Spinacia oleracea (Spinach).